A 405-amino-acid chain; its full sequence is S-adenosylmethionine synthase (405 aa).

Position 139–144 (G139–D144) interacts with ATP.

Belongs to the AdoMet synthase 2 family. Mg(2+) serves as cofactor.

The enzyme catalyses L-methionine + ATP + H2O = S-adenosyl-L-methionine + phosphate + diphosphate. The protein operates within amino-acid biosynthesis; S-adenosyl-L-methionine biosynthesis; S-adenosyl-L-methionine from L-methionine: step 1/1. In terms of biological role, catalyzes the formation of S-adenosylmethionine from methionine and ATP. This is S-adenosylmethionine synthase from Thermococcus gammatolerans (strain DSM 15229 / JCM 11827 / EJ3).